A 435-amino-acid polypeptide reads, in one-letter code: 3-phosphoshikimate 1-carboxyvinyltransferase (435 aa).

3-phosphoshikimate-binding residues include Lys-22, Ser-23, and Arg-27. Lys-22 lines the phosphoenolpyruvate pocket. Phosphoenolpyruvate-binding residues include Gly-94 and Arg-122. 3-phosphoshikimate-binding residues include Ser-166, Gln-168, Asp-314, and Lys-341. Gln-168 lines the phosphoenolpyruvate pocket. Catalysis depends on Asp-314, which acts as the Proton acceptor. Phosphoenolpyruvate contacts are provided by Arg-345 and Arg-388.

It belongs to the EPSP synthase family. Monomer.

The protein resides in the cytoplasm. The enzyme catalyses 3-phosphoshikimate + phosphoenolpyruvate = 5-O-(1-carboxyvinyl)-3-phosphoshikimate + phosphate. It participates in metabolic intermediate biosynthesis; chorismate biosynthesis; chorismate from D-erythrose 4-phosphate and phosphoenolpyruvate: step 6/7. In terms of biological role, catalyzes the transfer of the enolpyruvyl moiety of phosphoenolpyruvate (PEP) to the 5-hydroxyl of shikimate-3-phosphate (S3P) to produce enolpyruvyl shikimate-3-phosphate and inorganic phosphate. This is 3-phosphoshikimate 1-carboxyvinyltransferase from Ruthia magnifica subsp. Calyptogena magnifica.